The chain runs to 1249 residues: Voltage-dependent calcium channel unc-36 (1249 aa).

An N-terminal signal peptide occupies residues 1–19; sequence MRVVHLLVVLATYVSTTSS. The Extracellular segment spans residues 20 to 1228; sequence FNKESIKECA…SENERRPCST (1209 aa). Asn-100, Asn-140, Asn-146, Asn-302, Asn-520, Asn-558, Asn-757, Asn-838, Asn-903, Asn-923, and Asn-1130 each carry an N-linked (GlcNAc...) asparagine glycan. The VWFA domain maps to 250–479; sequence NVLIMLDMSG…EKIHHYIRRM (230 aa). The helical transmembrane segment at 1229–1248 threads the bilayer; sequence SPTIVSIFQILFGVFLHFCI. Phe-1249 is a topological domain (cytoplasmic).

In terms of tissue distribution, decendants of the cells AB and AB.p (that give rise to nearly all non-pharyngeal neurons), decendants of P1 (that give rise to body muscle) and cell lineages that give rise to the adult and juvenile motor neurons. Expressed in body wall, vulval muscle and pharyngeal muscle.

It is found in the membrane. May act as an auxiliary subunit of the unc-2 voltage-gated calcium channel which appears to trigger calcium-activated signaling pathways that control the serotonin response. Inhibiting serotonin sensitivity of the vulval muscles results in egg laying defects. May act in both neurons and muscle cells to enhance motor activity as it is required for coordinated movement. Has a role in neural depolarization-induced calcium influx and pharyngeal pumping. Involved in restricting the expression of the putative olfactory receptor str-2 to only one of the two AWC neurons. The chain is Voltage-dependent calcium channel unc-36 (unc-36) from Caenorhabditis elegans.